A 353-amino-acid chain; its full sequence is Quinolinate synthase (353 aa).

The iminosuccinate site is built by His-47 and Ser-68. Cys-113 is a binding site for [4Fe-4S] cluster. Iminosuccinate contacts are provided by residues 139 to 141 (YAN) and Ser-156. Cys-200 serves as a coordination point for [4Fe-4S] cluster. Iminosuccinate contacts are provided by residues 226–228 (HPE) and Thr-243. Cys-297 serves as a coordination point for [4Fe-4S] cluster.

It belongs to the quinolinate synthase family. Type 1 subfamily. [4Fe-4S] cluster is required as a cofactor.

Its subcellular location is the cytoplasm. It carries out the reaction iminosuccinate + dihydroxyacetone phosphate = quinolinate + phosphate + 2 H2O + H(+). It participates in cofactor biosynthesis; NAD(+) biosynthesis; quinolinate from iminoaspartate: step 1/1. Catalyzes the condensation of iminoaspartate with dihydroxyacetone phosphate to form quinolinate. The sequence is that of Quinolinate synthase from Vibrio cholerae serotype O1 (strain ATCC 39541 / Classical Ogawa 395 / O395).